A 117-amino-acid chain; its full sequence is Immunoglobulin heavy variable 1-24 (117 aa).

A signal peptide spans 1-19; that stretch reads MDCTWRILFLVAAATGTHA. Positions 20–44 are framework-1; that stretch reads QVQLVQSGAEVKKPGASVKVSCKVS. The Ig-like domain maps to 20–117; that stretch reads QVQLVQSGAE…EDTAVYYCAT (98 aa). Cys41 and Cys115 are joined by a disulfide. Positions 45-52 are complementarity-determining-1; it reads GYTLTELS. The framework-2 stretch occupies residues 53 to 69; the sequence is MHWVRQAPGKGLEWMGG. Positions 70-77 are complementarity-determining-2; it reads FDPEDGET. The segment at 78–115 is framework-3; the sequence is IYAQKFQGRVTMTEDTSTDTAYMELSSLRSEDTAVYYC. The segment at 116–117 is complementarity-determining-3; the sequence is AT.

In terms of assembly, immunoglobulins are composed of two identical heavy chains and two identical light chains; disulfide-linked.

The protein resides in the secreted. Its subcellular location is the cell membrane. V region of the variable domain of immunoglobulin heavy chains that participates in the antigen recognition. Immunoglobulins, also known as antibodies, are membrane-bound or secreted glycoproteins produced by B lymphocytes. In the recognition phase of humoral immunity, the membrane-bound immunoglobulins serve as receptors which, upon binding of a specific antigen, trigger the clonal expansion and differentiation of B lymphocytes into immunoglobulins-secreting plasma cells. Secreted immunoglobulins mediate the effector phase of humoral immunity, which results in the elimination of bound antigens. The antigen binding site is formed by the variable domain of one heavy chain, together with that of its associated light chain. Thus, each immunoglobulin has two antigen binding sites with remarkable affinity for a particular antigen. The variable domains are assembled by a process called V-(D)-J rearrangement and can then be subjected to somatic hypermutations which, after exposure to antigen and selection, allow affinity maturation for a particular antigen. In Homo sapiens (Human), this protein is Immunoglobulin heavy variable 1-24.